A 137-amino-acid polypeptide reads, in one-letter code: uncharacterized protein (137 aa).

Residues 58-135 (VHVVAKTVRP…EVNLQMFLMN (78 aa)) form the Ubiquitin-like domain.

Its subcellular location is the cytoplasm. The protein resides in the nucleus. This is an uncharacterized protein from Schizosaccharomyces pombe (strain 972 / ATCC 24843) (Fission yeast).